Here is a 374-residue protein sequence, read N- to C-terminus: Chaperone protein DnaJ (374 aa).

A J domain is found at Asp-5 to Gly-70. Residues Gly-131 to Tyr-209 form a CR-type zinc finger. The Zn(2+) site is built by Cys-144, Cys-147, Cys-161, Cys-164, Cys-183, Cys-186, Cys-197, and Cys-200. CXXCXGXG motif repeat units follow at residues Cys-144 to Gly-151, Cys-161 to Gly-168, Cys-183 to Gly-190, and Cys-197 to Gly-204.

The protein belongs to the DnaJ family. Homodimer. It depends on Zn(2+) as a cofactor.

The protein resides in the cytoplasm. Functionally, participates actively in the response to hyperosmotic and heat shock by preventing the aggregation of stress-denatured proteins and by disaggregating proteins, also in an autonomous, DnaK-independent fashion. Unfolded proteins bind initially to DnaJ; upon interaction with the DnaJ-bound protein, DnaK hydrolyzes its bound ATP, resulting in the formation of a stable complex. GrpE releases ADP from DnaK; ATP binding to DnaK triggers the release of the substrate protein, thus completing the reaction cycle. Several rounds of ATP-dependent interactions between DnaJ, DnaK and GrpE are required for fully efficient folding. Also involved, together with DnaK and GrpE, in the DNA replication of plasmids through activation of initiation proteins. The sequence is that of Chaperone protein DnaJ from Marinomonas sp. (strain MWYL1).